Consider the following 289-residue polypeptide: Acetyl-coenzyme A carboxylase carboxyl transferase subunit beta (289 aa).

One can recognise a CoA carboxyltransferase N-terminal domain in the interval 27–289 (LWSKCPSCES…SFMRVPAGAA (263 aa)). Zn(2+) is bound by residues cysteine 31, cysteine 34, cysteine 50, and cysteine 53. The C4-type zinc finger occupies 31–53 (CPSCESVLYRTDLESNSEVCPKC).

It belongs to the AccD/PCCB family. In terms of assembly, acetyl-CoA carboxylase is a heterohexamer composed of biotin carboxyl carrier protein (AccB), biotin carboxylase (AccC) and two subunits each of ACCase subunit alpha (AccA) and ACCase subunit beta (AccD). The cofactor is Zn(2+).

It localises to the cytoplasm. It catalyses the reaction N(6)-carboxybiotinyl-L-lysyl-[protein] + acetyl-CoA = N(6)-biotinyl-L-lysyl-[protein] + malonyl-CoA. It participates in lipid metabolism; malonyl-CoA biosynthesis; malonyl-CoA from acetyl-CoA: step 1/1. Functionally, component of the acetyl coenzyme A carboxylase (ACC) complex. Biotin carboxylase (BC) catalyzes the carboxylation of biotin on its carrier protein (BCCP) and then the CO(2) group is transferred by the transcarboxylase to acetyl-CoA to form malonyl-CoA. This chain is Acetyl-coenzyme A carboxylase carboxyl transferase subunit beta, found in Methylobacillus flagellatus (strain ATCC 51484 / DSM 6875 / VKM B-1610 / KT).